An 88-amino-acid chain; its full sequence is Large ribosomal subunit protein eL34 (88 aa).

Belongs to the eukaryotic ribosomal protein eL34 family.

The sequence is that of Large ribosomal subunit protein eL34 from Saccharolobus solfataricus (strain ATCC 35092 / DSM 1617 / JCM 11322 / P2) (Sulfolobus solfataricus).